Reading from the N-terminus, the 116-residue chain is Spexin (116 aa).

Positions 1 to 26 (MKGLRSLAATTLALFLVFVFLGNSSC) are cleaved as a signal peptide. Positions 27–35 (APQRLLERR) are excised as a propeptide. Glutamine 49 bears the Glutamine amide mark. 2 propeptides span residues 50 to 116 (GRRF…LLNW) and 74 to 116 (PNPQ…LLNW). The span at 55–73 (SDQSRRKDLSDRPLPERRS) shows a compositional bias: basic and acidic residues. The tract at residues 55–77 (SDQSRRKDLSDRPLPERRSPNPQ) is disordered.

This sequence belongs to the spexin family. Expressed in the type I glomic cells within the carotid body (at protein level). Expressed predominantly in pancreas, testis, kidney, brain and placenta. Expressed in submucosal layer of esophagus and stomach fundus.

Its subcellular location is the secreted. The protein localises to the extracellular space. It localises to the cytoplasmic vesicle. The protein resides in the secretory vesicle. Its function is as follows. Plays a role as a central modulator of cardiovascular and renal function and nociception. Also plays a role in energy metabolism and storage. Inhibits adrenocortical cell proliferation with minor stimulation on corticosteroid release. Functionally, acts as a ligand for galanin receptors GALR2 and GALR3. Intracerebroventricular administration of the peptide induces an increase in arterial blood pressure, a decrease in both heart rate and renal excretion and delayed natriuresis. Intraventricular administration of the peptide induces antinociceptive activity. Also induces contraction of muscarinic-like stomach smooth muscles. Intraperitoneal administration of the peptide induces a reduction in food consumption and body weight. Inhibits long chain fatty acid uptake into adipocytes. In terms of biological role, intracerebroventricular administration of the peptide induces a decrease in heart rate, but no change in arterial pressure, and an increase in urine flow rate. Intraventricular administration of the peptide induces antinociceptive activity. This chain is Spexin (SPX), found in Homo sapiens (Human).